A 148-amino-acid chain; its full sequence is Large ribosomal subunit protein uL15 (148 aa).

Residues 1-57 (MRLNDVKPQKGSKKRRRRVGRGISAGQGASAGLGMRGQKSRSGSGTRPGFEGGQQPL) are disordered. The segment covering 10 to 20 (KGSKKRRRRVG) has biased composition (basic residues). The segment covering 23 to 35 (ISAGQGASAGLGM) has biased composition (gly residues).

The protein belongs to the universal ribosomal protein uL15 family. As to quaternary structure, part of the 50S ribosomal subunit.

In terms of biological role, binds to the 23S rRNA. The protein is Large ribosomal subunit protein uL15 of Trichormus variabilis (strain ATCC 29413 / PCC 7937) (Anabaena variabilis).